We begin with the raw amino-acid sequence, 252 residues long: Chitooligosaccharide deacetylase (252 aa).

Positions 61 and 125 each coordinate Mg(2+).

It belongs to the YdjC deacetylase family. ChbG subfamily. In terms of assembly, homodimer. It depends on Mg(2+) as a cofactor.

Its subcellular location is the cytoplasm. It catalyses the reaction N,N'-diacetylchitobiose + H2O = N-acetyl-beta-D-glucosaminyl-(1-&gt;4)-D-glucosamine + acetate. It carries out the reaction diacetylchitobiose-6'-phosphate + H2O = N'-monoacetylchitobiose-6'-phosphate + acetate. It functions in the pathway glycan degradation; chitin degradation. Its function is as follows. Involved in the degradation of chitin. ChbG is essential for growth on the acetylated chitooligosaccharides chitobiose and chitotriose but is dispensable for growth on cellobiose and chitosan dimer, the deacetylated form of chitobiose. Deacetylation of chitobiose-6-P and chitotriose-6-P is necessary for both the activation of the chb promoter by the regulatory protein ChbR and the hydrolysis of phosphorylated beta-glucosides by the phospho-beta-glucosidase ChbF. Catalyzes the removal of only one acetyl group from chitobiose-6-P to yield monoacetylchitobiose-6-P, the inducer of ChbR and the substrate of ChbF. This chain is Chitooligosaccharide deacetylase, found in Escherichia fergusonii (strain ATCC 35469 / DSM 13698 / CCUG 18766 / IAM 14443 / JCM 21226 / LMG 7866 / NBRC 102419 / NCTC 12128 / CDC 0568-73).